A 305-amino-acid chain; its full sequence is Methionyl-tRNA formyltransferase (305 aa).

111 to 114 (SLLP) is a binding site for (6S)-5,6,7,8-tetrahydrofolate.

The protein belongs to the Fmt family.

It carries out the reaction L-methionyl-tRNA(fMet) + (6R)-10-formyltetrahydrofolate = N-formyl-L-methionyl-tRNA(fMet) + (6S)-5,6,7,8-tetrahydrofolate + H(+). Functionally, attaches a formyl group to the free amino group of methionyl-tRNA(fMet). The formyl group appears to play a dual role in the initiator identity of N-formylmethionyl-tRNA by promoting its recognition by IF2 and preventing the misappropriation of this tRNA by the elongation apparatus. The polypeptide is Methionyl-tRNA formyltransferase (Campylobacter jejuni subsp. jejuni serotype O:6 (strain 81116 / NCTC 11828)).